A 161-amino-acid chain; its full sequence is Cyclic pyranopterin monophosphate synthase (161 aa).

Residues 75–77 (LCH) and 113–114 (ME) contribute to the substrate site. D128 is an active-site residue.

Belongs to the MoaC family. Homohexamer; trimer of dimers.

The catalysed reaction is (8S)-3',8-cyclo-7,8-dihydroguanosine 5'-triphosphate = cyclic pyranopterin phosphate + diphosphate. Its pathway is cofactor biosynthesis; molybdopterin biosynthesis. Its function is as follows. Catalyzes the conversion of (8S)-3',8-cyclo-7,8-dihydroguanosine 5'-triphosphate to cyclic pyranopterin monophosphate (cPMP). This chain is Cyclic pyranopterin monophosphate synthase, found in Salmonella arizonae (strain ATCC BAA-731 / CDC346-86 / RSK2980).